The primary structure comprises 880 residues: GAS2-like protein 2 (880 aa).

Residues 32–159 (EAMKEDLAEW…CLLELGRRAW (128 aa)) form the Calponin-homology (CH) domain. The segment at 180 to 200 (RRELALPPPDPSPPAPPRRQP) is disordered. The segment covering 185–198 (LPPPDPSPPAPPRR) has biased composition (pro residues). The 73-residue stretch at 201–273 (CHFRNLDQMV…HYLDKHDPCR (73 aa)) folds into the GAR domain. Disordered stretches follow at residues 283–360 (SFLK…MAPF), 372–437 (WRQP…NPTP), 489–533 (ESVR…ELGR), and 676–880 (APTG…ESWV). Over residues 301–315 (GPSQTQPTMTISRSQ) the composition is skewed to polar residues. The segment at 438–880 (QRLRAIEATT…PLPPEEESWV (443 aa)) is interaction with ADORA2A. Pro residues predominate over residues 506-515 (RLPPARPPTP). The segment covering 725-734 (QDCSASTVSA) has biased composition (polar residues). Composition is skewed to basic residues over residues 757-767 (KGRRTLRKPKR) and 774-785 (LKLRPRIRPRRD).

Belongs to the GAS2 family. In terms of assembly, interacts with ADORA2A (via its cytoplasmic C-terminal domain). Interacts with GNAS, GNAL, GNAQ, and GNA13. Interacts with MAPRE1. Expressed in bronchial and nasal epithelial cells (at protein level). Expressed in brain, kidney, lung, testis, fallopian tubes, and skeletal muscle. Expressed at low levels in stomach and colon.

The protein resides in the cytoplasm. The protein localises to the cytoskeleton. It is found in the cell membrane. It localises to the stress fiber. Its subcellular location is the cilium basal body. Involved in the cross-linking of microtubules and microfilaments. Regulates microtubule dynamics and stability by interacting with microtubule plus-end tracking proteins, such as MAPRE1, to regulate microtubule growth along actin stress fibers. Enhances ADORA2-mediated adenylyl cyclase activation by acting as a scaffold to recruit trimeric G-protein complexes to ADORA2A. Regulates ciliary orientation and performance in cells located in the airway. In Homo sapiens (Human), this protein is GAS2-like protein 2 (GAS2L2).